We begin with the raw amino-acid sequence, 116 residues long: MEAKAVGKHLRISARKARLVADEVRGYDYKEAIDILRFTNKAASSMIINLLNSAVANAIQMNESLDPNSLFVKKIYVDDGPIMKRFRPRARGRASRIRKRLSHITVVVSEIEKKVS.

Belongs to the universal ribosomal protein uL22 family. In terms of assembly, part of the 50S ribosomal subunit.

Its function is as follows. This protein binds specifically to 23S rRNA; its binding is stimulated by other ribosomal proteins, e.g. L4, L17, and L20. It is important during the early stages of 50S assembly. It makes multiple contacts with different domains of the 23S rRNA in the assembled 50S subunit and ribosome. Functionally, the globular domain of the protein is located near the polypeptide exit tunnel on the outside of the subunit, while an extended beta-hairpin is found that lines the wall of the exit tunnel in the center of the 70S ribosome. In Leptospira biflexa serovar Patoc (strain Patoc 1 / Ames), this protein is Large ribosomal subunit protein uL22.